The primary structure comprises 257 residues: Zinc transporter ZupT (257 aa).

5 helical membrane-spanning segments follow: residues 5 to 25, 32 to 52, 61 to 81, 109 to 129, and 137 to 157; these read LILT…AVLG, VLAF…LMEM, GMSP…YFGL, AILL…ATFV, and LGMG…LAVA. Fe(2+) contacts are provided by asparagine 120 and glutamate 123. Residues glutamate 123 and histidine 148 each contribute to the Zn(2+) site. Fe(2+)-binding residues include asparagine 149, glutamate 152, and glutamate 181. Zn(2+) is bound at residue glutamate 152. The next 3 membrane-spanning stretches (helical) occupy residues 182–202, 203–223, and 236–256; these read ILGG…VVMA, AVMA…LMPL, and GVLC…TAGI.

The protein belongs to the ZIP transporter (TC 2.A.5) family. ZupT subfamily.

It is found in the cell inner membrane. It catalyses the reaction Zn(2+)(in) = Zn(2+)(out). Mediates zinc uptake. May also transport other divalent cations. This Escherichia fergusonii (strain ATCC 35469 / DSM 13698 / CCUG 18766 / IAM 14443 / JCM 21226 / LMG 7866 / NBRC 102419 / NCTC 12128 / CDC 0568-73) protein is Zinc transporter ZupT.